The chain runs to 89 residues: Small ribosomal subunit protein uS17 (89 aa).

This sequence belongs to the universal ribosomal protein uS17 family. As to quaternary structure, part of the 30S ribosomal subunit.

In terms of biological role, one of the primary rRNA binding proteins, it binds specifically to the 5'-end of 16S ribosomal RNA. The polypeptide is Small ribosomal subunit protein uS17 (Xanthomonas campestris pv. campestris (strain 8004)).